The following is a 104-amino-acid chain: N(4)-acetylcytidine amidohydrolase (104 aa).

One can recognise an ASCH domain in the interval 6-96 (ITFYQRFEAD…TIYPNEHESW (91 aa)). The Proton acceptor role is filled by Lys-21. The active-site Nucleophile is Thr-24. Glu-74 (proton donor) is an active-site residue.

The protein belongs to the N(4)-acetylcytidine amidohydrolase family.

It carries out the reaction N(4)-acetylcytidine + H2O = cytidine + acetate + H(+). The catalysed reaction is N(4)-acetyl-2'-deoxycytidine + H2O = 2'-deoxycytidine + acetate + H(+). The enzyme catalyses N(4)-acetylcytosine + H2O = cytosine + acetate + H(+). Catalyzes the hydrolysis of N(4)-acetylcytidine (ac4C). The chain is N(4)-acetylcytidine amidohydrolase from Haemophilus influenzae (strain 86-028NP).